We begin with the raw amino-acid sequence, 154 residues long: MAALSSAAVTIPSMAPSAPGRRRMRSSLVVRASLGKAAGAAAVAVAASAMLAGGAMAQEVLLGANGGVLVFEPNDFTVKSGETITFKNNAGFPHNVVFDEDAVPSGVDVSKISQEEYLNAPGETFSVTLTVPGTYGFYCEPHAGAGMVGKVTVN.

The transit peptide at 1-57 (MAALSSAAVTIPSMAPSAPGRRRMRSSLVVRASLGKAAGAAAVAVAASAMLAGGAMA) directs the protein to the chloroplast. Positions 58–154 (QEVLLGANGG…AGMVGKVTVN (97 aa)) constitute a Plastocyanin-like domain. Positions 94, 139, 142, and 147 each coordinate Cu cation.

This sequence belongs to the plastocyanin family. The cofactor is Cu(2+).

It localises to the plastid. The protein resides in the chloroplast thylakoid membrane. Its function is as follows. Participates in electron transfer between P700 and the cytochrome b6-f complex in photosystem I. This is Plastocyanin, chloroplastic (PETE) from Oryza sativa subsp. indica (Rice).